The chain runs to 331 residues: Adenosine deaminase (331 aa).

His12 and His14 together coordinate Zn(2+). Substrate contacts are provided by His14, Asp16, and Gly170. Residue His197 coordinates Zn(2+). Glu200 (proton donor) is an active-site residue. Asp278 is a Zn(2+) binding site. Asp279 is a binding site for substrate.

Belongs to the metallo-dependent hydrolases superfamily. Adenosine and AMP deaminases family. Adenosine deaminase subfamily. The cofactor is Zn(2+).

The enzyme catalyses adenosine + H2O + H(+) = inosine + NH4(+). The catalysed reaction is 2'-deoxyadenosine + H2O + H(+) = 2'-deoxyinosine + NH4(+). In terms of biological role, catalyzes the hydrolytic deamination of adenosine and 2-deoxyadenosine. The sequence is that of Adenosine deaminase from Shewanella baltica (strain OS155 / ATCC BAA-1091).